Reading from the N-terminus, the 422-residue chain is Probable glucuronosyltransferase Os01g0926400 (422 aa).

The Cytoplasmic portion of the chain corresponds to 1-8 (MGTRPCAG). Residues 9–29 (VASAVAAAVAVLLLAVSCFAA) traverse the membrane as a helical; Signal-anchor for type II membrane protein segment. Topologically, residues 30 to 422 (AATTTQKHGR…QGLENDLKPW (393 aa)) are lumenal. N149 is a glycosylation site (N-linked (GlcNAc...) asparagine).

This sequence belongs to the glycosyltransferase 47 family.

It localises to the golgi apparatus membrane. Functionally, involved in the synthesis of glucuronoxylan hemicellulose in secondary cell walls. The sequence is that of Probable glucuronosyltransferase Os01g0926400 from Oryza sativa subsp. japonica (Rice).